Reading from the N-terminus, the 293-residue chain is FAS1 domain-containing protein DEHA2G15708g (293 aa).

A signal peptide spans 1–18; sequence MKLSSILYVSVLAHLVMS. The span at 76–87 shows a compositional bias: basic and acidic residues; the sequence is DHIGENEKREAK. Residues 76–126 are disordered; that stretch reads DHIGENEKREAKNVYNLQSLKEGLDDENDKREGNVNKPEVSEEGSNKGDKR. The FAS1 domain occupies 141–290; sequence QNLLQSILPQ…GYIFVINDVL (150 aa).

It is found in the vacuole. This is FAS1 domain-containing protein DEHA2G15708g from Debaryomyces hansenii (strain ATCC 36239 / CBS 767 / BCRC 21394 / JCM 1990 / NBRC 0083 / IGC 2968) (Yeast).